Reading from the N-terminus, the 264-residue chain is Ribosome-recycling factor, mitochondrial (264 aa).

The protein belongs to the RRF family.

The protein resides in the mitochondrion. Necessary for protein synthesis in mitochondria. Functions as a ribosome recycling factor in mitochondria. The protein is Ribosome-recycling factor, mitochondrial (RRF1) of Yarrowia lipolytica (strain CLIB 122 / E 150) (Yeast).